Consider the following 369-residue polypeptide: Protein-glutamate methylesterase/protein-glutamine glutaminase (369 aa).

The 117-residue stretch at Arg6–Gln122 folds into the Response regulatory domain. At Asp56 the chain carries 4-aspartylphosphate. A disordered region spans residues Gly136 to Pro178. Residues Thr138–Ala159 are compositionally biased toward low complexity. The CheB-type methylesterase domain occupies Thr173–Glu367. Active-site residues include Ser185, His212, and Asp309.

The protein belongs to the CheB family. Post-translationally, phosphorylated by CheA. Phosphorylation of the N-terminal regulatory domain activates the methylesterase activity.

Its subcellular location is the cytoplasm. It catalyses the reaction [protein]-L-glutamate 5-O-methyl ester + H2O = L-glutamyl-[protein] + methanol + H(+). The enzyme catalyses L-glutaminyl-[protein] + H2O = L-glutamyl-[protein] + NH4(+). Functionally, involved in chemotaxis. Part of a chemotaxis signal transduction system that modulates chemotaxis in response to various stimuli. Catalyzes the demethylation of specific methylglutamate residues introduced into the chemoreceptors (methyl-accepting chemotaxis proteins or MCP) by CheR. Also mediates the irreversible deamidation of specific glutamine residues to glutamic acid. This Haloarcula marismortui (strain ATCC 43049 / DSM 3752 / JCM 8966 / VKM B-1809) (Halobacterium marismortui) protein is Protein-glutamate methylesterase/protein-glutamine glutaminase.